An 855-amino-acid polypeptide reads, in one-letter code: Alanine--tRNA ligase (855 aa).

Positions 555, 559, 657, and 661 each coordinate Zn(2+).

This sequence belongs to the class-II aminoacyl-tRNA synthetase family. Requires Zn(2+) as cofactor.

It localises to the cytoplasm. The enzyme catalyses tRNA(Ala) + L-alanine + ATP = L-alanyl-tRNA(Ala) + AMP + diphosphate. In terms of biological role, catalyzes the attachment of alanine to tRNA(Ala) in a two-step reaction: alanine is first activated by ATP to form Ala-AMP and then transferred to the acceptor end of tRNA(Ala). Also edits incorrectly charged Ser-tRNA(Ala) and Gly-tRNA(Ala) via its editing domain. In Wolinella succinogenes (strain ATCC 29543 / DSM 1740 / CCUG 13145 / JCM 31913 / LMG 7466 / NCTC 11488 / FDC 602W) (Vibrio succinogenes), this protein is Alanine--tRNA ligase.